Here is a 153-residue protein sequence, read N- to C-terminus: Riboflavin synthase (153 aa).

Belongs to the DMRL synthase family.

The catalysed reaction is 2 6,7-dimethyl-8-(1-D-ribityl)lumazine + H(+) = 5-amino-6-(D-ribitylamino)uracil + riboflavin. The protein operates within cofactor biosynthesis; riboflavin biosynthesis; riboflavin from 2-hydroxy-3-oxobutyl phosphate and 5-amino-6-(D-ribitylamino)uracil: step 2/2. In Archaeoglobus fulgidus (strain ATCC 49558 / DSM 4304 / JCM 9628 / NBRC 100126 / VC-16), this protein is Riboflavin synthase (ribC).